The chain runs to 173 residues: Mesencephalic astrocyte-derived neurotrophic factor homolog (173 aa).

Positions 1-22 (MKTWHMVVVIGFLATLAQTSLA) are cleaved as a signal peptide. Disulfide bonds link C28/C114, C31/C103, C61/C72, and C148/C151.

The protein belongs to the ARMET family.

Its subcellular location is the secreted. Its function is as follows. Required during the maturation of the embryonic nervous system for maintenance of neuronal and cuticular connectivity. Essential for maintenance of dopaminergic neurons and dopamine levels. In Drosophila sechellia (Fruit fly), this protein is Mesencephalic astrocyte-derived neurotrophic factor homolog.